The chain runs to 104 residues: Small ribosomal subunit protein bS6 (104 aa).

This sequence belongs to the bacterial ribosomal protein bS6 family.

Its function is as follows. Binds together with bS18 to 16S ribosomal RNA. The sequence is that of Small ribosomal subunit protein bS6 from Elusimicrobium minutum (strain Pei191).